The following is a 293-amino-acid chain: Acetyl-coenzyme A carboxylase carboxyl transferase subunit beta (293 aa).

In terms of domain architecture, CoA carboxyltransferase N-terminal spans 29–293 (LWVKCPECGQ…GCKAKKAAGK (265 aa)). Zn(2+) contacts are provided by Cys33, Cys36, Cys52, and Cys55. The segment at 33–55 (CPECGQVVYRKDLHANASVCSNC) adopts a C4-type zinc-finger fold.

Belongs to the AccD/PCCB family. Acetyl-CoA carboxylase is a heterohexamer composed of biotin carboxyl carrier protein (AccB), biotin carboxylase (AccC) and two subunits each of ACCase subunit alpha (AccA) and ACCase subunit beta (AccD). Requires Zn(2+) as cofactor.

It localises to the cytoplasm. The catalysed reaction is N(6)-carboxybiotinyl-L-lysyl-[protein] + acetyl-CoA = N(6)-biotinyl-L-lysyl-[protein] + malonyl-CoA. The protein operates within lipid metabolism; malonyl-CoA biosynthesis; malonyl-CoA from acetyl-CoA: step 1/1. In terms of biological role, component of the acetyl coenzyme A carboxylase (ACC) complex. Biotin carboxylase (BC) catalyzes the carboxylation of biotin on its carrier protein (BCCP) and then the CO(2) group is transferred by the transcarboxylase to acetyl-CoA to form malonyl-CoA. This chain is Acetyl-coenzyme A carboxylase carboxyl transferase subunit beta, found in Prochlorococcus marinus (strain MIT 9303).